Reading from the N-terminus, the 204-residue chain is ATP-dependent Clp protease proteolytic subunit 1 (204 aa).

Serine 97 acts as the Nucleophile in catalysis. Residue histidine 122 is part of the active site.

It belongs to the peptidase S14 family. Fourteen ClpP subunits assemble into 2 heptameric rings which stack back to back to give a disk-like structure with a central cavity, resembling the structure of eukaryotic proteasomes.

The protein resides in the cytoplasm. The catalysed reaction is Hydrolysis of proteins to small peptides in the presence of ATP and magnesium. alpha-casein is the usual test substrate. In the absence of ATP, only oligopeptides shorter than five residues are hydrolyzed (such as succinyl-Leu-Tyr-|-NHMec, and Leu-Tyr-Leu-|-Tyr-Trp, in which cleavage of the -Tyr-|-Leu- and -Tyr-|-Trp bonds also occurs).. Its function is as follows. Cleaves peptides in various proteins in a process that requires ATP hydrolysis. Has a chymotrypsin-like activity. Plays a major role in the degradation of misfolded proteins. The sequence is that of ATP-dependent Clp protease proteolytic subunit 1 from Nostoc sp. (strain PCC 7120 / SAG 25.82 / UTEX 2576).